The chain runs to 446 residues: Transcription factor Dp-2 (446 aa).

Thr-2 bears the N-acetylthreonine mark. Phosphoserine; by CDK2 occurs at positions 24 and 42. The interval 60–82 is interaction with CEBPA; it reads PQMIISTPQRIANSGSVLIGNPY. Positions 103 to 118 match the Nuclear localization signal motif; it reads SDRKRAREFIDSDFSE. Ser-122 carries the phosphoserine modification. The DNA-binding element occupies 129-210; sequence GKGLRHFSMK…PTGKKRNQVD (82 aa). Positions 176–210 match the DEF box motif; sequence DQENIRRRVYDALNVLMAMNIISSLPTGKKRNQVD. The interval 219–292 is dimerization; that stretch reads NLEIEKQRRI…RKTVIDCSIS (74 aa). Positions 229–261 are DCB1; sequence ERIKQKRAQLQELLLQQIAFKNLVQRNRQNEQQ. Positions 274–330 are DCB2; that stretch reads LPFIIINTSRKTVIDCSISSDKFEYLFNFDNTFEIHDDIEVLKRMGMSFGLESGKCS. The interval 404–446 is disordered; sequence LPASNSHQSSSAASHFSESRGETPCSFNDEDEEDEEEDPSSPE. The segment covering 406–419 has biased composition (low complexity); that stretch reads ASNSHQSSSAASHF. The span at 431-446 shows a compositional bias: acidic residues; that stretch reads NDEDEEDEEEDPSSPE.

It belongs to the E2F/DP family. As to quaternary structure, component of the DRTF1/E2F transcription factor complex. Forms heterodimers with E2F family members. The complex can interact with hypophosphorylated retinoblastoma protein RB1 and related proteins (RBL1 and RBL2) that inhibit the E2F transactivation domain. During the cell cycle, RB becomes phosphorylated in mid-to-late G1 phase, detaches from the DRTF1/E2F complex rendering E2F transcriptionally active. Interacts with GMCL. Component of the DREAM complex (also named LINC complex) at least composed of E2F4, E2F5, LIN9, LIN37, LIN52, LIN54, MYBL1, MYBL2, RBL1, RBL2, RBBP4, TFDP1 and TFDP2. The complex exists in quiescent cells where it represses cell cycle-dependent genes. It dissociates in S phase when LIN9, LIN37, LIN52 and LIN54 form a subcomplex that binds to MYBL2. The complex TFDP2:E2F1 interacts with CEBPA; the interaction prevents CEBPA binding to target gene promoters and represses its transcriptional activity. Post-translationally, phosphorylation by E2F1-bound cyclin A-CDK2, in the S phase, inhibits E2F-mediated DNA binding and transactivation. In terms of tissue distribution, expressed in all tissues examined. Highest levels in spleen and heart.

The protein localises to the nucleus. In terms of biological role, can stimulate E2F-dependent transcription. Binds DNA cooperatively with E2F family members through the E2 recognition site, 5'-TTTC[CG]CGC-3', found in the promoter region of a number of genes whose products are involved in cell cycle regulation or in DNA replication. The TFDP2:E2F complex functions in the control of cell-cycle progression from G1 to S phase. The E2F1:DP complex appears to mediate both cell proliferation and apoptosis. Blocks adipocyte differentiation by repressing CEBPA binding to its target gene promoters. In Mus musculus (Mouse), this protein is Transcription factor Dp-2 (Tfdp2).